The following is a 210-amino-acid chain: Uracil phosphoribosyltransferase (210 aa).

Residues Arg80, Arg105, and 132-140 contribute to the 5-phospho-alpha-D-ribose 1-diphosphate site; that span reads DPMLATGGS. Residues Ile195 and 200-202 each bind uracil; that span reads GDA. Position 201 (Asp201) interacts with 5-phospho-alpha-D-ribose 1-diphosphate.

This sequence belongs to the UPRTase family. The cofactor is Mg(2+).

It catalyses the reaction UMP + diphosphate = 5-phospho-alpha-D-ribose 1-diphosphate + uracil. The protein operates within pyrimidine metabolism; UMP biosynthesis via salvage pathway; UMP from uracil: step 1/1. Its activity is regulated as follows. Allosterically activated by GTP. In terms of biological role, catalyzes the conversion of uracil and 5-phospho-alpha-D-ribose 1-diphosphate (PRPP) to UMP and diphosphate. The polypeptide is Uracil phosphoribosyltransferase (Thermoanaerobacter pseudethanolicus (strain ATCC 33223 / 39E) (Clostridium thermohydrosulfuricum)).